Consider the following 343-residue polypeptide: D-alanine--D-alanine ligase (343 aa).

In terms of domain architecture, ATP-grasp spans 129-335 (KYVLENFGVK…YGELISEIIE (207 aa)). 162-217 (ENKLGYDVFIKPSNSGSSVGISKAHNREELEAGLEEALKFDRKVLVEVALNAREIE) is a binding site for ATP. Mg(2+) is bound by residues Asp288, Glu302, and Asn304.

Belongs to the D-alanine--D-alanine ligase family. Mg(2+) serves as cofactor. It depends on Mn(2+) as a cofactor.

It is found in the cytoplasm. The catalysed reaction is 2 D-alanine + ATP = D-alanyl-D-alanine + ADP + phosphate + H(+). It participates in cell wall biogenesis; peptidoglycan biosynthesis. Cell wall formation. The sequence is that of D-alanine--D-alanine ligase from Clostridium novyi (strain NT).